Reading from the N-terminus, the 447-residue chain is Argininosuccinate lyase (447 aa).

The protein belongs to the lyase 1 family. Argininosuccinate lyase subfamily.

It is found in the cytoplasm. It catalyses the reaction 2-(N(omega)-L-arginino)succinate = fumarate + L-arginine. It functions in the pathway amino-acid biosynthesis; L-arginine biosynthesis; L-arginine from L-ornithine and carbamoyl phosphate: step 3/3. The protein is Argininosuccinate lyase of Sulfolobus acidocaldarius (strain ATCC 33909 / DSM 639 / JCM 8929 / NBRC 15157 / NCIMB 11770).